Reading from the N-terminus, the 133-residue chain is Large ribosomal subunit protein uL22 (133 aa).

Belongs to the universal ribosomal protein uL22 family. As to quaternary structure, part of the 50S ribosomal subunit.

Its function is as follows. This protein binds specifically to 23S rRNA; its binding is stimulated by other ribosomal proteins, e.g. L4, L17, and L20. It is important during the early stages of 50S assembly. It makes multiple contacts with different domains of the 23S rRNA in the assembled 50S subunit and ribosome. The globular domain of the protein is located near the polypeptide exit tunnel on the outside of the subunit, while an extended beta-hairpin is found that lines the wall of the exit tunnel in the center of the 70S ribosome. The protein is Large ribosomal subunit protein uL22 of Aquifex aeolicus (strain VF5).